Reading from the N-terminus, the 230-residue chain is MEKTTPTQYDVKVQYNNSILNYAIDHSDQLTDIQKELIQFTKENIERHIMLTQAEQCSFFKLLIQVLNAKKTIDIGVFTGLSSLTAALAMGDEGRVVACDVSTDYTQHALKFWAKAGVDHKINLKIQPASKTLQELIDQGEENTYDFVFIDADKTGYDTYYELSLKLIRKGGIIAIDNVLQHGRVADPNANVEPNLVAIRALNDKILADKRVTKTMLPIADGITLVTKIN.

S-adenosyl-L-methionine-binding positions include threonine 52, aspartate 74, 76–77 (GV), serine 82, aspartate 100, alanine 129, aspartate 151, aspartate 153, and tyrosine 160. A divalent metal cation is bound at residue aspartate 151. Residues aspartate 177 and asparagine 178 each coordinate a divalent metal cation.

Belongs to the class I-like SAM-binding methyltransferase superfamily. Cation-dependent O-methyltransferase family. CCoAMT subfamily.

The enzyme catalyses (E)-caffeoyl-CoA + S-adenosyl-L-methionine = (E)-feruloyl-CoA + S-adenosyl-L-homocysteine + H(+). This Dictyostelium discoideum (Social amoeba) protein is Probable caffeoyl-CoA O-methyltransferase 1 (omt5).